Consider the following 836-residue polypeptide: MERGTVLIQPGLWTRDTSWTLLYFLCYILPQTSPQVLRIGGIFETVENEPVNVEELAFKFAVTSINRNRTLMPNTTLTYDIQRINLFDSFEASRRACDQLALGVAALFGPSHSSSVSAVQSICNALEVPHIQTRWKHPSVDNRDLFYINLYPDYAAISRAVLDLVLYYNWKTVTVVYEDSTGLIRLQELIKAPSRYNIKIKIRQLPSGNKDAKPLLKEMKKGKEFYVIFDCSHETAAEILKQILFMGMMTEYYHYFFTTLDLFALDLELYRYSGVNMTGFRLLNIDNPHVSSIIEKWSMERLQAPPRPETGLLDGVMTTEAALMYDAVYMVAIASHRASQLTVSSLQCHRHKPWRLGPRFMNLIKEARWDGLTGRITFNKTDGLRKDFDLDIISLKEEGTEKIGIWNSNSGLNMTDGNRDRSNNITDSLANRTLIVTTILEEPYVMYRKSDKPLYGNDRFEGYCLDLLKELSNILGFLYDVKLVPDGKYGAQNDKGEWNGMVKELIDHRADLAVAPLTITYVREKVIDFSKPFMTLGISILYRKPNGTNPGVFSFLNPLSPDIWMYVLLACLGVSCVLFVIARFTPYEWYNPHPCNPDSDVVENNFTLLNSFWFGVGALMQQGSELMPKALSTRIVGGIWWFFTLIIISSYTANLAAFLTVERMESPIDSADDLAKQTKIEYGAVRDGSTMTFFKKSKISTYEKMWAFMSSRQPSALGVENIGGIFIVLAAGLVLSVFVAIGEFIYKSRKNNDIEQKGKSSRLRFYFRNKVRFHGSKTESLGVEKCLSFNAIMEELGISLKNQKKIKKKSRTKGKSSFTSILTCHQRRTQRKETVA.

Positions 1–30 (MERGTVLIQPGLWTRDTSWTLLYFLCYILP) are cleaved as a signal peptide. Over 31 to 561 (QTSPQVLRIG…VFSFLNPLSP (531 aa)) the chain is Extracellular. N-linked (GlcNAc...) asparagine glycans are attached at residues Asn68, Asn74, Asn276, Asn379, Asn413, Asn424, and Asn431. Pro516, Thr518, and Arg523 together coordinate L-glutamate. N-linked (GlcNAc...) asparagine glycosylation occurs at Asn546. The helical transmembrane segment at 562–582 (DIWMYVLLACLGVSCVLFVIA) threads the bilayer. The Cytoplasmic segment spans residues 583 to 638 (RFTPYEWYNPHPCNPDSDVVENNFTLLNSFWFGVGALMQQGSELMPKALSTRIVGG). A helical membrane pass occupies residues 639–659 (IWWFFTLIIISSYTANLAAFL). The Extracellular portion of the chain corresponds to 660 to 721 (TVERMESPID…RQPSALGVEN (62 aa)). The L-glutamate site is built by Ser689 and Thr690. Residues 722–742 (IGGIFIVLAAGLVLSVFVAIG) form a helical membrane-spanning segment. The Cytoplasmic segment spans residues 743–836 (EFIYKSRKNN…RRTQRKETVA (94 aa)).

The protein belongs to the glutamate-gated ion channel (TC 1.A.10.1) family. GRIK1 subfamily. As to quaternary structure, homotetramer or heterotetramer of pore-forming glutamate receptor subunits. Tetramers may be formed by the dimerization of dimers. Can form functional heteromeric receptors with GRIK4 and GRIK5. Interacts with KLHL17. As to expression, most abundant in the cerebellum. Also present in the suprachiasmatic nuclei of the hypothalamus.

The protein localises to the cell membrane. Its subcellular location is the postsynaptic cell membrane. It carries out the reaction Ca(2+)(in) = Ca(2+)(out). Ionotropic glutamate receptor that functions as a cation-permeable ligand-gated ion channel, gated by L-glutamate and the glutamatergic agonist kainic acid. L-glutamate acts as an excitatory neurotransmitter at many synapses in the central nervous system. Binding of the excitatory neurotransmitter L-glutamate induces a conformation change, leading to the opening of the cation channel, and thereby converts the chemical signal to an electrical impulse. The receptor then desensitizes rapidly and enters a transient inactive state, characterized by the presence of bound agonist. This Mus musculus (Mouse) protein is Glutamate receptor ionotropic, kainate 1 (Grik1).